Reading from the N-terminus, the 370-residue chain is Anhydro-N-acetylmuramic acid kinase (370 aa).

Residue 13 to 20 (GTSMDGVD) participates in ATP binding.

This sequence belongs to the anhydro-N-acetylmuramic acid kinase family.

The catalysed reaction is 1,6-anhydro-N-acetyl-beta-muramate + ATP + H2O = N-acetyl-D-muramate 6-phosphate + ADP + H(+). Its pathway is amino-sugar metabolism; 1,6-anhydro-N-acetylmuramate degradation. The protein operates within cell wall biogenesis; peptidoglycan recycling. In terms of biological role, catalyzes the specific phosphorylation of 1,6-anhydro-N-acetylmuramic acid (anhMurNAc) with the simultaneous cleavage of the 1,6-anhydro ring, generating MurNAc-6-P. Is required for the utilization of anhMurNAc either imported from the medium or derived from its own cell wall murein, and thus plays a role in cell wall recycling. The polypeptide is Anhydro-N-acetylmuramic acid kinase (Vibrio parahaemolyticus serotype O3:K6 (strain RIMD 2210633)).